Reading from the N-terminus, the 506-residue chain is ATP synthase subunit alpha (506 aa).

170 to 177 (GDRQTGKT) contacts ATP.

It belongs to the ATPase alpha/beta chains family. In terms of assembly, F-type ATPases have 2 components, CF(1) - the catalytic core - and CF(0) - the membrane proton channel. CF(1) has five subunits: alpha(3), beta(3), gamma(1), delta(1), epsilon(1). CF(0) has four main subunits: a(1), b(1), b'(1) and c(9-12).

It is found in the cellular thylakoid membrane. It carries out the reaction ATP + H2O + 4 H(+)(in) = ADP + phosphate + 5 H(+)(out). Its function is as follows. Produces ATP from ADP in the presence of a proton gradient across the membrane. The alpha chain is a regulatory subunit. This Synechococcus sp. (strain JA-2-3B'a(2-13)) (Cyanobacteria bacterium Yellowstone B-Prime) protein is ATP synthase subunit alpha.